Reading from the N-terminus, the 136-residue chain is Ciliary microtubule inner protein 1 (136 aa).

Its subcellular location is the cell projection. It localises to the cilium. This Mus musculus (Mouse) protein is Ciliary microtubule inner protein 1 (Cimip1).